The chain runs to 654 residues: Myrosinase-binding protein 2 (654 aa).

Jacalin-type lectin domains are found at residues 2-151 (SEKV…HFFA), 156-291 (LKHF…HFAP), 346-489 (PNKV…YFAP), and 502-645 (AKKL…HAVP). Over residues 314-346 (VPAPSPAPAPSPAPAPAPAPAPAPTPAPAPAPP) the composition is skewed to pro residues. Positions 314-355 (VPAPSPAPAPSPAPAPAPAPAPAPTPAPAPAPPNKVEALGGN) are disordered.

Belongs to the jacalin lectin family. In terms of tissue distribution, expressed in flowers. Detected mainly in ovules and styles of immature flowers, but also in pistils, styles, stamens, petals and embryos. Not detected in leaves.

The sequence is that of Myrosinase-binding protein 2 (MBP2) from Arabidopsis thaliana (Mouse-ear cress).